The following is a 255-amino-acid chain: RNA polymerase sigma-F factor (255 aa).

Residues 61–74 (DLFQIGCIGLLKSV) carry the Polymerase core binding motif. A DNA-binding region (H-T-H motif) is located at residues 221-240 (QSEVAERLGISQVQVSRLEK).

This sequence belongs to the sigma-70 factor family. In terms of assembly, interacts transiently with the RNAP core.

Interaction with SpoIIAB inhibits sigma-F activity throughout the cell before the formation of the asymmetric septum; after septation the interaction is confined to the mother cell, and sigma-F activity is released in the prespore. Fin, a second, forespore-specific anti-sigma factor is induced in 2 successive waves by sigma-F and sigma-G, by antagonizing sigma-F it allows the switch to sigma-G factor and progression to the late sporulation development stages. Functionally, sigma factors are initiation factors that promote the attachment of RNA polymerase to specific initiation sites and are then released. This sigma factor is responsible for the expression of sporulation specific genes. Interaction with SpoIIAB inhibits sigma-F activity throughout the cell before the formation of the asymmetric septum; after septation the interaction is confined to the mother cell, and sigma F activity is released in the prespore. Responsible for expression of csfB (the anti-sigma-G factor Gin). Associates with the RNAP core only in stationary phase cells. The chain is RNA polymerase sigma-F factor (sigF) from Bacillus subtilis (strain 168).